An 805-amino-acid polypeptide reads, in one-letter code: Muscarinic acetylcholine receptor DM1 (805 aa).

Over 1–100 (MEPVMSLALA…GFETKGPRYS (100 aa)) the chain is Extracellular. Low complexity predominate over residues 27–43 (TSTTTTTTTTTSTTTTT). The disordered stretch occupies residues 27 to 47 (TSTTTTTTTTTSTTTTTASPA). 3 N-linked (GlcNAc...) asparagine glycosylation sites follow: asparagine 65, asparagine 84, and asparagine 87. A helical transmembrane segment spans residues 101–121 (LASMVVMGFVAAILSTVTVAG). Topologically, residues 122-141 (NVMVMISFKIDKQLQTISNY) are cytoplasmic. Residues 142–162 (FLFSLAIADFAIGAISMPLFA) form a helical membrane-spanning segment. Over 163 to 177 (VTTILGYWPLGPIVC) the chain is Extracellular. The helical transmembrane segment at 178-198 (DTWLALDYLASNASVLNLLII) threads the bilayer. The Cytoplasmic segment spans residues 199 to 220 (SFDRYFSVTRPLTYRAKRTTNR). Residues 221–241 (AAVMIGAAWGISLLLWPPWIY) form a helical membrane-spanning segment. The Extracellular portion of the chain corresponds to 242–266 (SWPYIEGKRTVPKDECYIQFIETNQ). A helical transmembrane segment spans residues 267–287 (YITFGTALAAFYFPVTIMCFL). The Cytoplasmic portion of the chain corresponds to 288-718 (YWRIWRETKK…KRQESKAAKT (431 aa)). 3 disordered regions span residues 302 to 322 (LPNLQAGKKDSSKRSNSSDEN), 340 to 359 (GNDHDTWRRPRSESSPDAES), and 507 to 530 (GNGNGAINNNNNASHNGNGAVNGN). Composition is skewed to basic and acidic residues over residues 308–318 (GKKDSSKRSNS) and 341–353 (NDHDTWRRPRSES). Residues 507 to 525 (GNGNGAINNNNNASHNGNG) are compositionally biased toward low complexity. Residues 719 to 739 (LSAILLSFIITWTPYNILVLI) traverse the membrane as a helical segment. Residues 740–752 (KPLTTCSDCIPTE) lie on the Extracellular side of the membrane. A helical transmembrane segment spans residues 753 to 773 (LWDFFYALCYINSTINPMCYA). The Cytoplasmic segment spans residues 774-805 (LCNATFRRTYVRILTCKWHTRNREGMVRGVYN).

The protein belongs to the G-protein coupled receptor 1 family. Muscarinic acetylcholine receptor subfamily. Intense staining in the glomeruli of the antennal lobes, the region of the nervous system containing terminals of antennal olfactory sensory neurons and mechanosensory neurons. Also a discrete group of neurosecretory cells in the pars intercerebralis of the brain.

The protein localises to the cell membrane. It localises to the postsynaptic cell membrane. The muscarinic acetylcholine receptor mediates various cellular responses, including inhibition of adenylate cyclase, breakdown of phosphoinositides and modulation of potassium channels through the action of G proteins. Primary transducing effect is Pi turnover. May have a role in the processing of olfactory and mechanosensory signals; regulation of neurosecretion. This is Muscarinic acetylcholine receptor DM1 (mAChR-A) from Drosophila melanogaster (Fruit fly).